Here is a 361-residue protein sequence, read N- to C-terminus: Histidinol-phosphate aminotransferase (361 aa).

Positions 26–45 (GMDPEDLTKLSSNENPHGPS) are disordered. Lysine 222 bears the N6-(pyridoxal phosphate)lysine mark.

This sequence belongs to the class-II pyridoxal-phosphate-dependent aminotransferase family. Histidinol-phosphate aminotransferase subfamily. Pyridoxal 5'-phosphate serves as cofactor.

It carries out the reaction L-histidinol phosphate + 2-oxoglutarate = 3-(imidazol-4-yl)-2-oxopropyl phosphate + L-glutamate. The protein operates within amino-acid biosynthesis; L-histidine biosynthesis; L-histidine from 5-phospho-alpha-D-ribose 1-diphosphate: step 7/9. This Haloferax volcanii (strain ATCC 29605 / DSM 3757 / JCM 8879 / NBRC 14742 / NCIMB 2012 / VKM B-1768 / DS2) (Halobacterium volcanii) protein is Histidinol-phosphate aminotransferase (hisC).